Reading from the N-terminus, the 485-residue chain is Glucose-6-phosphate 1-dehydrogenase (485 aa).

NADP(+)-binding positions include R46, 89 to 90, and K144; that span reads DI. Substrate is bound by residues H174, K178, E212, and D231. H236 serves as the catalytic Proton acceptor. K334 lines the substrate pocket.

The protein belongs to the glucose-6-phosphate dehydrogenase family.

The enzyme catalyses D-glucose 6-phosphate + NADP(+) = 6-phospho-D-glucono-1,5-lactone + NADPH + H(+). Its pathway is carbohydrate degradation; pentose phosphate pathway; D-ribulose 5-phosphate from D-glucose 6-phosphate (oxidative stage): step 1/3. In terms of biological role, catalyzes the oxidation of glucose 6-phosphate to 6-phosphogluconolactone. This chain is Glucose-6-phosphate 1-dehydrogenase, found in Zymomonas mobilis subsp. mobilis (strain ATCC 31821 / ZM4 / CP4).